The sequence spans 445 residues: Na(+)-translocating NADH-quinone reductase subunit A (445 aa).

It belongs to the NqrA family. In terms of assembly, composed of six subunits; NqrA, NqrB, NqrC, NqrD, NqrE and NqrF.

It carries out the reaction a ubiquinone + n Na(+)(in) + NADH + H(+) = a ubiquinol + n Na(+)(out) + NAD(+). Its function is as follows. NQR complex catalyzes the reduction of ubiquinone-1 to ubiquinol by two successive reactions, coupled with the transport of Na(+) ions from the cytoplasm to the periplasm. NqrA to NqrE are probably involved in the second step, the conversion of ubisemiquinone to ubiquinol. In Teredinibacter turnerae (strain ATCC 39867 / T7901), this protein is Na(+)-translocating NADH-quinone reductase subunit A.